A 378-amino-acid chain; its full sequence is 7-methylxanthine methyltransferase 1 (378 aa).

S-adenosyl-L-homocysteine is bound by residues Y18, C61, N66, D100, L101, S139, F140, and C156. Theobromine is bound by residues Y157, H160, and W161. Mg(2+) is bound by residues N178, D260, F262, and N263. Y362 serves as a coordination point for theobromine.

The protein belongs to the methyltransferase superfamily. Type-7 methyltransferase family. Mg(2+) serves as cofactor. As to expression, mainly expressed, at low levels, in leaves and fruits (grains). Also present, at lower levels, in roots, stamens and pistils.

The protein resides in the cytoplasm. It catalyses the reaction 7-methylxanthine + S-adenosyl-L-methionine = theobromine + S-adenosyl-L-homocysteine + H(+). The protein operates within alkaloid biosynthesis. Its function is as follows. Involved in the biosynthesis of caffeine. Catalyzes the conversion of 7-methylxanthine (7mX) to theobromine and of paraxanthine to caffeine. This chain is 7-methylxanthine methyltransferase 1, found in Coffea canephora (Robusta coffee).